The primary structure comprises 590 residues: Pescadillo homolog (590 aa).

The BRCT domain maps to Val-332 to Val-422. Positions Ala-561–Ser-590 are disordered.

The protein belongs to the pescadillo family. As to quaternary structure, interacts with BOP1 and WDR12. Interacts with NSN1. In terms of tissue distribution, expressed in shoot and root apical meristems, epidermal cells and vasculature of developing leaves, trichome progenitor cells, young flowers, developing pollen grains and ovules, and mature pollen grains.

Its subcellular location is the nucleus. It localises to the nucleolus. It is found in the nucleoplasm. Functionally, required for maturation of ribosomal RNAs and formation of the large ribosomal subunit. Plays an essential role in cell growth and survival through its regulation of ribosome biogenesis and mitotic progression. Required for normal root cell growth and differentiation. This chain is Pescadillo homolog, found in Arabidopsis thaliana (Mouse-ear cress).